The sequence spans 632 residues: Palmitoyltransferase ZDHHC17 (632 aa).

Topologically, residues 1–304 (MQREEGFNTK…LKADKEFRQK (304 aa)) are cytoplasmic. The necessary and sufficient for interaction with DNAJC5 and SNAP25 stretch occupies residues 11–305 (MADGPDEYDT…KADKEFRQKV (295 aa)). ANK repeat units follow at residues 51-86 (THIDDYSTWDIVKATQYGIYERCRELVEAGYDVRQP), 89-118 (ENVTLLHWAAINNRIDLVKYYISKGAIVDQ), 123-152 (LNSTPLHWATRQGHLSMVVQLMKYGADPSL), 156-185 (EGCSCIHLAAQFGHTSIVAYLIAKGQDVDM), 189-219 (NGMTPLMWAAYRTHSVDPTRLLLTFNVSVNL), 224-253 (HKNTALHWAVLAGNTTVISLLLEAGANVDA), and 257-286 (KGESALDLAKQRKNVWMINHLQEARQAKGY). A run of 2 helical transmembrane segments spans residues 305–325 (VMLGTPFLVIWLVGFIADLNI) and 326–346 (DSWLIKGLMYGGVWATVQFLS). The Cytoplasmic segment spans residues 347-357 (KSFFDHSMHSA). Residues 358-378 (LPLGIYLATKFWMYVTWFFWF) form a helical membrane-spanning segment. The Lumenal portion of the chain corresponds to 379–381 (WND). A helical transmembrane segment spans residues 382–402 (LNFLFIHLPFLANSVALFYNF). Topologically, residues 403-480 (GKSWKSDPGI…GNCVGAGNHR (78 aa)) are cytoplasmic. The region spanning 437–487 (IFCSTCLIRKPVRSKHCGVCNRCIAKFDHHCPWVGNCVGAGNHRYFMGYLF) is the DHHC domain. C467 serves as the catalytic S-palmitoyl cysteine intermediate. A helical transmembrane segment spans residues 481–501 (YFMGYLFFLLFMICWMIYGCI). Residues 502–529 (SYWGLHCETTYTKDGFWTYITQIATCSP) are Lumenal-facing. A helical membrane pass occupies residues 530–550 (WMFWMFLNSVFHFMWVAVLLM). The Cytoplasmic segment spans residues 551–632 (CQMYQISCLG…QISGSGYQLV (82 aa)).

It belongs to the DHHC palmitoyltransferase family. AKR/ZDHHC17 subfamily. In terms of assembly, interacts (via ANK repeats) with numerous proteins (via the consensus sequence motif [VIAP]-[VIT]-x-x-Q-P). Interacts (via ANK repeats) with CLIP3. Interacts (via ANK repeats) with HTT; this interaction is inversely correlated to the length of the polyglutamine tract added to the huntingtin protein in Huntington disease. Interacts (via ANK repeats) with DNAJC5 (via C-terminus). Interacts (via ANK repeats) with MAP6. Interacts (via ANK repeats) with SNAP23. Interacts (via ANK repeats) with SNAP25. Interacts (via ANK repeats) with EVL. Interacts with SPRED1 and SPRED3. Interacts with GPM6A and OPTN. May interact (via ANK repeats) with SPRED2. May interact with NTRK1; may regulate its localization and function. In terms of processing, autopalmitoylated. Autopalmitoylation has a regulatory role in ZDHHC17-mediated Mg(2+) transport. In terms of tissue distribution, expressed in all brain regions. Expression is highest in the cortex, cerebellum, occipital lobe and caudate and lowest in the spinal cord. Expression is also seen in testis, pancreas, heart and kidney.

Its subcellular location is the golgi apparatus membrane. It is found in the cytoplasmic vesicle membrane. The protein localises to the presynaptic cell membrane. It catalyses the reaction L-cysteinyl-[protein] + hexadecanoyl-CoA = S-hexadecanoyl-L-cysteinyl-[protein] + CoA. The catalysed reaction is L-cysteinyl-[protein] + tetradecanoyl-CoA = S-tetradecanoyl-L-cysteinyl-[protein] + CoA. It carries out the reaction L-cysteinyl-[protein] + octadecanoyl-CoA = S-octadecanoyl-L-cysteinyl-[protein] + CoA. Functionally, palmitoyltransferase that catalyzes the addition of palmitate onto various protein substrates and is involved in a variety of cellular processes. Has no stringent fatty acid selectivity and in addition to palmitate can also transfer onto target proteins myristate from tetradecanoyl-CoA and stearate from octadecanoyl-CoA. Palmitoyltransferase specific for a subset of neuronal proteins, including SNAP25, DLG4/PSD95, GAD2, SYT1 and HTT. Also palmitoylates neuronal protein GPM6A as well as SPRED1 and SPRED3. Could also play a role in axonogenesis through the regulation of NTRK1 and the downstream ERK1/ERK2 signaling cascade. May be involved in the sorting or targeting of critical proteins involved in the initiating events of endocytosis at the plasma membrane. May play a role in Mg(2+) transport. Could also palmitoylate DNAJC5 and regulate its localization to the Golgi membrane. Palmitoylates CASP6, thereby preventing its dimerization and subsequent activation. In Homo sapiens (Human), this protein is Palmitoyltransferase ZDHHC17.